The primary structure comprises 329 residues: 4-hydroxythreonine-4-phosphate dehydrogenase (329 aa).

Substrate-binding residues include His136 and Thr137. His166, His211, and His266 together coordinate a divalent metal cation. Lys274, Asn283, and Arg292 together coordinate substrate.

This sequence belongs to the PdxA family. Homodimer. It depends on Zn(2+) as a cofactor. Requires Mg(2+) as cofactor. The cofactor is Co(2+).

It localises to the cytoplasm. It catalyses the reaction 4-(phosphooxy)-L-threonine + NAD(+) = 3-amino-2-oxopropyl phosphate + CO2 + NADH. It participates in cofactor biosynthesis; pyridoxine 5'-phosphate biosynthesis; pyridoxine 5'-phosphate from D-erythrose 4-phosphate: step 4/5. Functionally, catalyzes the NAD(P)-dependent oxidation of 4-(phosphooxy)-L-threonine (HTP) into 2-amino-3-oxo-4-(phosphooxy)butyric acid which spontaneously decarboxylates to form 3-amino-2-oxopropyl phosphate (AHAP). This Shigella dysenteriae serotype 1 (strain Sd197) protein is 4-hydroxythreonine-4-phosphate dehydrogenase.